The sequence spans 146 residues: FAD synthase (146 aa).

ATP is bound by residues 9 to 10, 14 to 17, and Asp92; these read TF and HPGH.

This sequence belongs to the archaeal FAD synthase family. As to quaternary structure, homodimer. It depends on a divalent metal cation as a cofactor.

It carries out the reaction FMN + ATP + H(+) = FAD + diphosphate. It functions in the pathway cofactor biosynthesis; FAD biosynthesis; FAD from FMN: step 1/1. Catalyzes the transfer of the AMP portion of ATP to flavin mononucleotide (FMN) to produce flavin adenine dinucleotide (FAD) coenzyme. The protein is FAD synthase of Halobacterium salinarum (strain ATCC 29341 / DSM 671 / R1).